Reading from the N-terminus, the 224-residue chain is tRNA (guanine-N(7)-)-methyltransferase (224 aa).

S-adenosyl-L-methionine is bound by residues glutamate 54, glutamate 79, and aspartate 129. Aspartate 129 is an active-site residue. 2 residues coordinate substrate: lysine 133 and aspartate 165.

Belongs to the class I-like SAM-binding methyltransferase superfamily. TrmB family.

The catalysed reaction is guanosine(46) in tRNA + S-adenosyl-L-methionine = N(7)-methylguanosine(46) in tRNA + S-adenosyl-L-homocysteine. The protein operates within tRNA modification; N(7)-methylguanine-tRNA biosynthesis. In terms of biological role, catalyzes the formation of N(7)-methylguanine at position 46 (m7G46) in tRNA. The sequence is that of tRNA (guanine-N(7)-)-methyltransferase from Chlamydia pneumoniae (Chlamydophila pneumoniae).